A 341-amino-acid chain; its full sequence is LRP2-binding protein (341 aa).

One copy of the TPR repeat lies at 56 to 89 (VQANFLLGQLFFEEGWYEDALLQFEKVKDEDNQA). Sel1-like repeat units follow at residues 90–122 (LYQA…TSDC), 130–165 (YAAA…DNGN), 170–203 (LKAQ…GNGS), 204–239 (LESQ…ERGN), 240–271 (VYAQ…SHDN), and 291–326 (AIAT…QLDA).

Its subcellular location is the cytoplasm. Functionally, may act as an adapter that regulates LRP2 function. In Xenopus laevis (African clawed frog), this protein is LRP2-binding protein (lrp2bp).